The chain runs to 44 residues: Diuretic hormone (44 aa).

Val44 carries the post-translational modification Valine amide.

Its subcellular location is the secreted. In terms of biological role, regulation of fluid secretion. Stimulates primary urine secretion by Malpighian tubules and causes a dose-dependent stimulation of cAMP levels in the tubules. May act as clearance peptide in that it may remove metabolic waste from the hemolymph. The polypeptide is Diuretic hormone (Stomoxys calcitrans (Stable fly)).